We begin with the raw amino-acid sequence, 612 residues long: Dihydroxy-acid dehydratase (612 aa).

D81 contacts Mg(2+). A [2Fe-2S] cluster-binding site is contributed by C122. The Mg(2+) site is built by D123 and K124. The residue at position 124 (K124) is an N6-carboxylysine. A [2Fe-2S] cluster-binding site is contributed by C193. E489 is a Mg(2+) binding site. S515 serves as the catalytic Proton acceptor.

It belongs to the IlvD/Edd family. Homodimer. The cofactor is [2Fe-2S] cluster. Mg(2+) serves as cofactor.

It carries out the reaction (2R)-2,3-dihydroxy-3-methylbutanoate = 3-methyl-2-oxobutanoate + H2O. It catalyses the reaction (2R,3R)-2,3-dihydroxy-3-methylpentanoate = (S)-3-methyl-2-oxopentanoate + H2O. It participates in amino-acid biosynthesis; L-isoleucine biosynthesis; L-isoleucine from 2-oxobutanoate: step 3/4. Its pathway is amino-acid biosynthesis; L-valine biosynthesis; L-valine from pyruvate: step 3/4. In terms of biological role, functions in the biosynthesis of branched-chain amino acids. Catalyzes the dehydration of (2R,3R)-2,3-dihydroxy-3-methylpentanoate (2,3-dihydroxy-3-methylvalerate) into 2-oxo-3-methylpentanoate (2-oxo-3-methylvalerate) and of (2R)-2,3-dihydroxy-3-methylbutanoate (2,3-dihydroxyisovalerate) into 2-oxo-3-methylbutanoate (2-oxoisovalerate), the penultimate precursor to L-isoleucine and L-valine, respectively. This is Dihydroxy-acid dehydratase from Stenotrophomonas maltophilia (strain K279a).